Consider the following 268-residue polypeptide: Tryptophan synthase alpha chain (268 aa).

Residues Glu49 and Asp60 each act as proton acceptor in the active site.

The protein belongs to the TrpA family. In terms of assembly, tetramer of two alpha and two beta chains.

It carries out the reaction (1S,2R)-1-C-(indol-3-yl)glycerol 3-phosphate + L-serine = D-glyceraldehyde 3-phosphate + L-tryptophan + H2O. It functions in the pathway amino-acid biosynthesis; L-tryptophan biosynthesis; L-tryptophan from chorismate: step 5/5. Functionally, the alpha subunit is responsible for the aldol cleavage of indoleglycerol phosphate to indole and glyceraldehyde 3-phosphate. The polypeptide is Tryptophan synthase alpha chain (Shigella sonnei (strain Ss046)).